A 447-amino-acid polypeptide reads, in one-letter code: MHTVIPHTHDTPAAAPVRSGAVAVVVGTGRSGTAAARLLHHLGASVRIVEKDESRVSAEFASLAARLGFDCRYGSHSAEQFAGADILVPSPGVPVASLLPYLDASRPPEIMAEIDLAARCVTSPVLAVTGTSGKTTTVSLCAAMLRAAGKRVFLGGNIGTPLSEYVLDVAAGEAPADVLVLEVSSFQLQTCTTLRPEVAVLINISANHLDYHADMQEYLDAKFRLFALQGPDDLAVLQSGMEELADRYALAARREFFDAVRRFPRTALLGSHNMANIEAAWLACRAFGVTQSQAAQAVEEFAPLEHRLEKVDEVAGVLFVNDSKSTTVDSMKAALESFDRPVLLLCGGKWKGGDLVSLIPVVRRHAKAVGLFGASREIFEHAWADVVPMSWDHDLQTAFRRMTAMAQPGDVVLMSPATSSYDLYSNYKERGGDFKRNVAAWKAERDD.

130 to 136 is an ATP binding site; sequence GTSGKTT.

It belongs to the MurCDEF family.

The protein resides in the cytoplasm. The catalysed reaction is UDP-N-acetyl-alpha-D-muramoyl-L-alanine + D-glutamate + ATP = UDP-N-acetyl-alpha-D-muramoyl-L-alanyl-D-glutamate + ADP + phosphate + H(+). It participates in cell wall biogenesis; peptidoglycan biosynthesis. Functionally, cell wall formation. Catalyzes the addition of glutamate to the nucleotide precursor UDP-N-acetylmuramoyl-L-alanine (UMA). The sequence is that of UDP-N-acetylmuramoylalanine--D-glutamate ligase from Oleidesulfovibrio alaskensis (strain ATCC BAA-1058 / DSM 17464 / G20) (Desulfovibrio alaskensis).